Consider the following 61-residue polypeptide: MANTSKVVKAARGHKFAVQNYNRCSRCGRARGYYRFFGMCRICIRELAHKGELPGVKKASW.

The Zn(2+) site is built by cysteine 24, cysteine 27, cysteine 40, and cysteine 43.

The protein belongs to the universal ribosomal protein uS14 family. Zinc-binding uS14 subfamily. In terms of assembly, part of the 30S ribosomal subunit. Contacts proteins S3 and S10. Zn(2+) serves as cofactor.

Functionally, binds 16S rRNA, required for the assembly of 30S particles and may also be responsible for determining the conformation of the 16S rRNA at the A site. The chain is Small ribosomal subunit protein uS14 from Deinococcus geothermalis (strain DSM 11300 / CIP 105573 / AG-3a).